A 95-amino-acid polypeptide reads, in one-letter code: Small ribosomal subunit protein bS6 (95 aa).

Belongs to the bacterial ribosomal protein bS6 family. As to quaternary structure, part of the 30S ribosomal subunit.

In terms of biological role, binds together with bS18 to 16S ribosomal RNA. The protein is Small ribosomal subunit protein bS6 (rpsF) of Bacillus subtilis (strain 168).